We begin with the raw amino-acid sequence, 266 residues long: Putative pyruvate, phosphate dikinase regulatory protein (266 aa).

147–154 (GLSRTSKT) contributes to the ADP binding site.

This sequence belongs to the pyruvate, phosphate/water dikinase regulatory protein family. PDRP subfamily.

It carries out the reaction N(tele)-phospho-L-histidyl/L-threonyl-[pyruvate, phosphate dikinase] + ADP = N(tele)-phospho-L-histidyl/O-phospho-L-threonyl-[pyruvate, phosphate dikinase] + AMP + H(+). It catalyses the reaction N(tele)-phospho-L-histidyl/O-phospho-L-threonyl-[pyruvate, phosphate dikinase] + phosphate + H(+) = N(tele)-phospho-L-histidyl/L-threonyl-[pyruvate, phosphate dikinase] + diphosphate. Functionally, bifunctional serine/threonine kinase and phosphorylase involved in the regulation of the pyruvate, phosphate dikinase (PPDK) by catalyzing its phosphorylation/dephosphorylation. This chain is Putative pyruvate, phosphate dikinase regulatory protein, found in Clostridium perfringens (strain 13 / Type A).